We begin with the raw amino-acid sequence, 230 residues long: UPF0758 protein Glov_0523 (230 aa).

An MPN domain is found at 108 to 230 (RFTSPAQVFD…YFSFVESGLL (123 aa)). Residues H179, H181, and D192 each coordinate Zn(2+). The short motif at 179–192 (HNHPSGDPAPSRED) is the JAMM motif element.

This sequence belongs to the UPF0758 family.

This is UPF0758 protein Glov_0523 from Trichlorobacter lovleyi (strain ATCC BAA-1151 / DSM 17278 / SZ) (Geobacter lovleyi).